A 79-amino-acid chain; its full sequence is MSNKGQLLQDPFLNALRKEHVPVSIYLVNGIKLQGNIESFDQYVVLLRNTVTQMVYKHAISTVVPARAVNFRVDEASDA.

In terms of domain architecture, Sm spans 10-69 (DPFLNALRKEHVPVSIYLVNGIKLQGNIESFDQYVVLLRNTVTQMVYKHAISTVVPARAV).

It belongs to the Hfq family. In terms of assembly, homohexamer.

In terms of biological role, RNA chaperone that binds small regulatory RNA (sRNAs) and mRNAs to facilitate mRNA translational regulation in response to envelope stress, environmental stress and changes in metabolite concentrations. Also binds with high specificity to tRNAs. The chain is RNA-binding protein Hfq from Ralstonia nicotianae (strain ATCC BAA-1114 / GMI1000) (Ralstonia solanacearum).